The chain runs to 1405 residues: MTATGKREWTPDQLAAIRARRANILVAAAAGAGKTAVLVERIIQRLTDPEDPVSLENLLVVTFTEAAAAEMRQRIGAALEAAVARDPENEALRRQLLLLNRAHISTIHSFCLWVLRTYFYRLDLDPGFRVMDPAEVDLMQLEVMDRVLEEAFAAEPDGGPVTDLADSLGGRGDANLVDLVLRVWEFSRSLPWPEAWLEQVTSSYKVTPETPLESLPWYGELRQMITLELQEAAWYLEQARQAAAAPGGPAVYLDNLENEKEQVTRLLEEVGDLPWEELNAKLAAVHFGRLKAARGEDVDPVLKERAGKLRNQARDLLYALKEDLCRDEAAVRAELERSGELVATLVGLVRRFDAALREAKGRRNLIDFSDLEHLCLRVLLDEGAGPGRLQPSDVALELRQRFAEVLVDEYQDINTVQDAILALVSRQDVAENNLFMVGDVKQSIYRFRLANPDLFLAKYRQYPEGEGGPNRRILLKANFRSRQGVVDGVNFIFRQVFSPLVGELEYDAAAALVGRAGYPENPAAATPAVEVYLQEGKVAAGTGAGGRTDLPEAVGAGKGGKISGGAGYGETLSGYGAASPGGETGAPDLEDLTALEREALLVARRIRRMVRGTPERPGPEFQVWDQEKKEYRDLTYRDIVILLRATRDRAPVFLEALKQYGIPAYADLGSGYFAATEIETILSLLRVIDNPHQDIPLAAVLRSPIVGLSAGDLARIRLAAPGEDFFTAVVKAAGAPLLPFTARESAAPSSTATGSGGALDNQPGQDPVCIAPYIEDTQEPWRDDHPGPGAAAGKAVPGKDRDLASLLREFLARLERWRTLARRQPLGDVIWQLYRETGYLEFVGGLPGGAQRQANLRALLDRARQFEGFARHGLFRFLRFIERLQQNEGDLGTARALGENEDVVRVMSIHRAKGLEFPVVIVAGLGKGFNLRDLSGDFLLHGRLGLVPLYLDAAAGIKYPTLPYLATGHRLRLEALSEELRILYVALTRAREKLILAGTVRDLPRQAENWCASLFLPGEQLPPVLTSRAGNPLDWLLPALARHPDAAAIRDLAGVGGGHLLPDPSSWQVEVVRGGELPDRGSEEPGVQVRVTAGYQGTESAGQQENPGLLCSGWPGGSRELAGAVTPVQETAGKTVAPPGSNIAEAGVEPGVSPPAGAVSPQDETGPTWLQQEVARRLAWTYPRQPLTALPVKLTVTDLKRRFDVFNEGETPLRPGENTFTRRPAFLQSHQGLTAAERGTATHLVLQHVDLSRPVTGESLAGLLQEMVEREILTPEQAAAVDIRAIVTFFAAPLGKRLLARWEQVKRELPFSLAVPAVELYPGLPAEAAAGEIILVQGIIDCLVEEEDGFLLLDFKTGRIPPDPLAAYREQVRFYTRAVETIFNRNVKEVHLYFLDGGVDFKVTS.

Residues 7 to 482 form the UvrD-like helicase ATP-binding domain; it reads REWTPDQLAA…ILLKANFRSR (476 aa). 28-35 lines the ATP pocket; that stretch reads AAAGAGKT. The UvrD-like helicase C-terminal domain occupies 551–914; sequence PEAVGAGKGG…RVMSIHRAKG (364 aa). 2 disordered regions span residues 778 to 797 and 1132 to 1165; these read QEPW…KAVP and AGKT…QDET. The segment covering 787-796 has biased composition (low complexity); it reads GPGAAAGKAV.

The protein belongs to the helicase family. AddA subfamily. In terms of assembly, heterodimer of AddA and AddB/RexB. It depends on Mg(2+) as a cofactor.

The enzyme catalyses Couples ATP hydrolysis with the unwinding of duplex DNA by translocating in the 3'-5' direction.. It catalyses the reaction ATP + H2O = ADP + phosphate + H(+). Functionally, the heterodimer acts as both an ATP-dependent DNA helicase and an ATP-dependent, dual-direction single-stranded exonuclease. Recognizes the chi site generating a DNA molecule suitable for the initiation of homologous recombination. The AddA nuclease domain is required for chi fragment generation; this subunit has the helicase and 3' -&gt; 5' nuclease activities. This Moorella thermoacetica (strain ATCC 39073 / JCM 9320) protein is ATP-dependent helicase/nuclease subunit A.